Reading from the N-terminus, the 1061-residue chain is E3 ubiquitin-protein ligase Smurf1 (1061 aa).

Residues 1-116 enclose the C2 domain; the sequence is MNKLDYPRRN…KGAGFQRLDL (116 aa). 2 disordered regions span residues 143-176 and 188-496; these read SGNP…WEER and HATK…SGQR. The 34-residue stretch at 167-200 folds into the WW 1 domain; sequence DSLPEGWEERRTDNGRVYYVNHATKSTQWDRPRQ. Composition is skewed to polar residues over residues 207 to 225 and 233 to 255; these read SHAT…NSGD and TRST…SVTA. At Ser262 the chain carries Phosphoserine. Positions 264–273 are enriched in polar residues; that stretch reads EILSSVGKEN. Composition is skewed to low complexity over residues 274 to 300 and 311 to 322; these read TSPT…SAGG and PATPTSSTTSAS. The span at 348 to 359 shows a compositional bias: polar residues; it reads TPTSPTGQQNYV. Low complexity predominate over residues 360-378; the sequence is NGNAQNGSTSGNGSGQAAQ. The segment covering 379–392 has biased composition (polar residues); it reads PQSASNGWTQEDAA. The span at 393–409 shows a compositional bias: low complexity; the sequence is TTTSPSTTTSPPRHSQS. Thr412 is modified (phosphothreonine). The residue at position 416 (Ser416) is a Phosphoserine. Polar residues predominate over residues 417–439; it reads PPASVTPSANGNVHSPNANSTPA. Positions 480 to 494 are enriched in gly residues; it reads RNGGTSGGGGGGGSG. WW domains lie at 513–546 and 561–594; these read LDLP…DPRI and GPLP…DPRL. The interval 513-602 is interaction with MAD; sequence LDLPPGYEMR…RLSGSILQMI (90 aa). 2 stretches are compositionally biased toward low complexity: residues 608 to 617 and 624 to 656; these read PPTSAANAGT and TPAT…TNPP. Residues 608-661 form a disordered region; that stretch reads PPTSAANAGTPAPPSATPATPSAAAAVPPQATPASNATPTTLTTTTNPPHRIVP. The 339-residue stretch at 723 to 1061 folds into the HECT domain; sequence RAKDMRKRLM…VEETCGFAVE (339 aa). Cys1029 (glycyl thioester intermediate) is an active-site residue.

As to quaternary structure, interacts with phosphorylated MAD.

It carries out the reaction S-ubiquitinyl-[E2 ubiquitin-conjugating enzyme]-L-cysteine + [acceptor protein]-L-lysine = [E2 ubiquitin-conjugating enzyme]-L-cysteine + N(6)-ubiquitinyl-[acceptor protein]-L-lysine.. The protein operates within protein modification; protein ubiquitination. E3 ubiquitin-protein ligase which accepts ubiquitin from an E2 ubiquitin-conjugating enzyme in the form of a thioester and then directly transfers the ubiquitin to targeted substrates. Down-regulates Dpp signaling after gastrulation by promoting MAD ubiquitination and subsequent degradation. This Drosophila melanogaster (Fruit fly) protein is E3 ubiquitin-protein ligase Smurf1.